Reading from the N-terminus, the 1008-residue chain is DNA polymerase catalytic subunit (1008 aa).

The protein belongs to the DNA polymerase type-B family.

It localises to the host nucleus. The catalysed reaction is DNA(n) + a 2'-deoxyribonucleoside 5'-triphosphate = DNA(n+1) + diphosphate. The chain is DNA polymerase catalytic subunit (9) from Equine herpesvirus 2 (strain 86/87) (EHV-2).